We begin with the raw amino-acid sequence, 370 residues long: tRNA pseudouridine(27/28) synthase (370 aa).

Catalysis depends on aspartate 56, which acts as the Nucleophile. A substrate-binding site is contributed by tyrosine 111.

This sequence belongs to the tRNA pseudouridine synthase TruA family.

It localises to the mitochondrion. It catalyses the reaction uridine(27/28) in mitochondrial tRNA = pseudouridine(27/28) in mitochondrial tRNA. Its function is as follows. Mitochondrial-specific pseudouridine synthase catalyzing the formation of pseudouridine at positions 27 and 28 in the anticodon stem and loop of mitochondrial transfer RNAs. The protein is tRNA pseudouridine(27/28) synthase (PUS2) of Saccharomyces cerevisiae (strain ATCC 204508 / S288c) (Baker's yeast).